Consider the following 593-residue polypeptide: ATP-dependent lipid A-core flippase (593 aa).

6 helical membrane passes run 33–53, 75–95, 137–157, 164–184, 262–282, and 292–312; these read IGIV…EAGI, WYVP…QYTS, AIVF…VTLV, IFLL…VAVI, QPLT…IAVV, and GGFV…KHLI. Residues 37–320 enclose the ABC transmembrane type-1 domain; the sequence is VLAVVTMGVV…LIDVNQPLQR (284 aa). The region spanning 352 to 586 is the ABC transporter domain; it reads IEFRAVSFDY…GGLYAHLHRI (235 aa). 386–393 lines the ATP pocket; the sequence is GPSGSGKT.

This sequence belongs to the ABC transporter superfamily. Lipid exporter (TC 3.A.1.106) family. As to quaternary structure, homodimer.

It localises to the cell inner membrane. The enzyme catalyses ATP + H2O + lipid A-core oligosaccharideSide 1 = ADP + phosphate + lipid A-core oligosaccharideSide 2.. Involved in lipopolysaccharide (LPS) biosynthesis. Translocates lipid A-core from the inner to the outer leaflet of the inner membrane. Transmembrane domains (TMD) form a pore in the inner membrane and the ATP-binding domain (NBD) is responsible for energy generation. The protein is ATP-dependent lipid A-core flippase of Burkholderia orbicola (strain AU 1054).